The chain runs to 64 residues: Large ribosomal subunit protein bL33c (64 aa).

This sequence belongs to the bacterial ribosomal protein bL33 family.

Its subcellular location is the plastid. It is found in the chloroplast. This Huperzia lucidula (Shining clubmoss) protein is Large ribosomal subunit protein bL33c.